Consider the following 208-residue polypeptide: Methylthioribulose-1-phosphate dehydratase (208 aa).

H98 and H100 together coordinate Zn(2+).

This sequence belongs to the aldolase class II family. MtnB subfamily. The cofactor is Zn(2+).

It carries out the reaction 5-(methylsulfanyl)-D-ribulose 1-phosphate = 5-methylsulfanyl-2,3-dioxopentyl phosphate + H2O. It participates in amino-acid biosynthesis; L-methionine biosynthesis via salvage pathway; L-methionine from S-methyl-5-thio-alpha-D-ribose 1-phosphate: step 2/6. In terms of biological role, catalyzes the dehydration of methylthioribulose-1-phosphate (MTRu-1-P) into 2,3-diketo-5-methylthiopentyl-1-phosphate (DK-MTP-1-P). This chain is Methylthioribulose-1-phosphate dehydratase, found in Hahella chejuensis (strain KCTC 2396).